A 134-amino-acid chain; its full sequence is Pro-opiomelanocortin (134 aa).

At S1 the chain carries N-acetylserine. Position 13 is a valine amide (V13). S31 bears the Phosphoserine mark. 2 stretches are compositionally biased toward basic and acidic residues: residues 43–52 (LARERPEPAR) and 79–104 (SAEK…DKRY). The segment at 43 to 107 (LARERPEPAR…PAKDKRYGGF (65 aa)) is disordered.

This sequence belongs to the POMC family. Specific enzymatic cleavages at paired basic residues yield the different active peptides. In terms of tissue distribution, ACTH and MSH are produced by the pituitary gland.

The protein resides in the secreted. Functionally, stimulates the adrenal glands to release cortisol. Anorexigenic peptide. Increases the pigmentation of skin by increasing melanin production in melanocytes. Its function is as follows. Increases the pigmentation of skin by increasing melanin production in melanocytes. In terms of biological role, endogenous orexigenic opiate. Functionally, endogenous opiate. This Loxodonta africana (African elephant) protein is Pro-opiomelanocortin (POMC).